The sequence spans 650 residues: Pentatricopeptide repeat-containing protein At2g41080 (650 aa).

12 PPR repeats span residues 43–77 (NTSL…GFSS), 78–112 (DKFI…NYMS), 114–139 (NILI…MPDR), 140–174 (KLTT…GFSP), 175–209 (DEYT…GLEL), 210–240 (DLVV…MPVR), 241–275 (NLVA…GCRP), 276–310 (NKIT…GASS), 311–341 (VVAV…REDE), 342–372 (DEVM…MAEQ), 378–413 (NEVA…GFKP), and 414–444 (GLKH…MPIK). A type E motif region spans residues 449–524 (IWKTLLSACN…EAGISWFEHK (76 aa)). Positions 525–555 (GEVHQFKMGDRSQSKSKEIYSYLKELTLEMK) are type E(+) motif. Residues 556-650 (LKGYKPDTAS…NGKCSCGDYW (95 aa)) form a type DYW motif region.

The protein belongs to the PPR family. PCMP-H subfamily.

This is Pentatricopeptide repeat-containing protein At2g41080 (PCMP-H29) from Arabidopsis thaliana (Mouse-ear cress).